Here is a 321-residue protein sequence, read N- to C-terminus: 4-hydroxy-3-methylbut-2-enyl diphosphate reductase (321 aa).

[4Fe-4S] cluster is bound at residue Cys-12. (2E)-4-hydroxy-3-methylbut-2-enyl diphosphate is bound by residues His-41 and His-74. Dimethylallyl diphosphate is bound by residues His-41 and His-74. Positions 41 and 74 each coordinate isopentenyl diphosphate. Position 96 (Cys-96) interacts with [4Fe-4S] cluster. His-124 is a (2E)-4-hydroxy-3-methylbut-2-enyl diphosphate binding site. Residue His-124 participates in dimethylallyl diphosphate binding. Isopentenyl diphosphate is bound at residue His-124. Glu-126 functions as the Proton donor in the catalytic mechanism. Thr-167 contributes to the (2E)-4-hydroxy-3-methylbut-2-enyl diphosphate binding site. Residue Cys-197 participates in [4Fe-4S] cluster binding. The (2E)-4-hydroxy-3-methylbut-2-enyl diphosphate site is built by Ser-225, Ser-226, Asn-227, and Ser-269. 4 residues coordinate dimethylallyl diphosphate: Ser-225, Ser-226, Asn-227, and Ser-269. 4 residues coordinate isopentenyl diphosphate: Ser-225, Ser-226, Asn-227, and Ser-269.

Belongs to the IspH family. Homodimer. [4Fe-4S] cluster is required as a cofactor.

The enzyme catalyses isopentenyl diphosphate + 2 oxidized [2Fe-2S]-[ferredoxin] + H2O = (2E)-4-hydroxy-3-methylbut-2-enyl diphosphate + 2 reduced [2Fe-2S]-[ferredoxin] + 2 H(+). It catalyses the reaction dimethylallyl diphosphate + 2 oxidized [2Fe-2S]-[ferredoxin] + H2O = (2E)-4-hydroxy-3-methylbut-2-enyl diphosphate + 2 reduced [2Fe-2S]-[ferredoxin] + 2 H(+). It participates in isoprenoid biosynthesis; dimethylallyl diphosphate biosynthesis; dimethylallyl diphosphate from (2E)-4-hydroxy-3-methylbutenyl diphosphate: step 1/1. Its pathway is isoprenoid biosynthesis; isopentenyl diphosphate biosynthesis via DXP pathway; isopentenyl diphosphate from 1-deoxy-D-xylulose 5-phosphate: step 6/6. In terms of biological role, catalyzes the conversion of 1-hydroxy-2-methyl-2-(E)-butenyl 4-diphosphate (HMBPP) into a mixture of isopentenyl diphosphate (IPP) and dimethylallyl diphosphate (DMAPP). Acts in the terminal step of the DOXP/MEP pathway for isoprenoid precursor biosynthesis. This is 4-hydroxy-3-methylbut-2-enyl diphosphate reductase from Escherichia coli O6:K15:H31 (strain 536 / UPEC).